A 1114-amino-acid chain; its full sequence is Extracellular sulfatase SULF-1 homolog (1114 aa).

A signal peptide spans 1–25 (MMRHSSLRLIIGGLILLLFVLNVFS). Ca(2+)-binding residues include Asp62, Asp63, and Cys98. The active-site Nucleophile is the Cys98. 3-oxoalanine (Cys) is present on Cys98. Residues Asn122, Asn159, Asn181, Asn208, and Asn251 are each glycosylated (N-linked (GlcNAc...) asparagine). Ca(2+)-binding residues include Asp327 and His328. A glycan (N-linked (GlcNAc...) asparagine) is linked at Asn447. The segment covering 466–479 (SSSSTAATLMSSTA) has biased composition (low complexity). The segment at 466-504 (SSSSTAATLMSSTAQQPEDGEEEVETDNEEDDVDGDGAM) is disordered. Acidic residues predominate over residues 483–502 (EDGEEEVETDNEEDDVDGDG). N-linked (GlcNAc...) asparagine glycans are attached at residues Asn683, Asn713, and Asn743. The tract at residues 781 to 812 (KQLRESNKQALAAGRRNDNRRRNDQSVLDSGA) is disordered. Residues 795–804 (RRNDNRRRND) are compositionally biased toward basic and acidic residues. Asn817 carries N-linked (GlcNAc...) asparagine glycosylation. Residues 876–895 (ADSKEMAREARRKLKEERQR) show a composition bias toward basic and acidic residues. The interval 876–901 (ADSKEMAREARRKLKEERQRKKERKR) is disordered. Residues Asn945, Asn955, and Asn974 are each glycosylated (N-linked (GlcNAc...) asparagine). The interval 1073–1114 (LSKYNRLTGSQQSHMKRRPWKQTPLQQSPRFLRTHSVTPAQA) is disordered. The segment covering 1095-1114 (TPLQQSPRFLRTHSVTPAQA) has biased composition (polar residues).

This sequence belongs to the sulfatase family. It depends on Ca(2+) as a cofactor. In terms of processing, the conversion to 3-oxoalanine (also known as C-formylglycine, FGly), of a serine or cysteine residue in prokaryotes and of a cysteine residue in eukaryotes, is critical for catalytic activity.

It is found in the endoplasmic reticulum. The protein localises to the golgi apparatus. Its subcellular location is the golgi stack. The protein resides in the cell surface. In Drosophila melanogaster (Fruit fly), this protein is Extracellular sulfatase SULF-1 homolog (Sulf1).